Consider the following 81-residue polypeptide: Large ribosomal subunit protein uL29c (81 aa).

The protein belongs to the universal ribosomal protein uL29 family.

It localises to the plastid. The protein resides in the chloroplast. The chain is Large ribosomal subunit protein uL29c from Phaeodactylum tricornutum (strain CCAP 1055/1).